A 485-amino-acid chain; its full sequence is Zinc finger protein 639 (485 aa).

The segment covering 1–14 (MNEYPKKRKRKTLH) has biased composition (basic residues). Positions 1–20 (MNEYPKKRKRKTLHPSRYSD) are disordered. S60 is subject to Phosphoserine. K76 is covalently cross-linked (Glycyl lysine isopeptide (Lys-Gly) (interchain with G-Cter in SUMO2)). S88 is subject to Phosphoserine. Residues K177, K181, and K226 each participate in a glycyl lysine isopeptide (Lys-Gly) (interchain with G-Cter in SUMO2) cross-link. 8 C2H2-type zinc fingers span residues 204-227 (YKCE…ILKH), 233-255 (NVCR…AKLH), 260-283 (YICK…ADTH), 289-311 (YWCE…FQEH), 374-397 (FVCQ…AIEH), 403-425 (HVCD…LNSH), 431-454 (YLCQ…DFKH), and 460-482 (HKCS…LPVH). Residues 371–455 (KNFFVCQVCG…LKIHLDFKHS (85 aa)) are interaction with CTNNA2.

Belongs to the krueppel C2H2-type zinc-finger protein family. As to quaternary structure, interacts with CTNNA2.

The protein localises to the nucleus. Its function is as follows. Binds DNA and may function as a transcriptional repressor. In Bos taurus (Bovine), this protein is Zinc finger protein 639 (ZNF639).